A 403-amino-acid chain; its full sequence is Argininosuccinate synthase (403 aa).

Residues 13 to 21 and Ala-40 each bind ATP; that span reads AYSGGLDTS. Residues Tyr-92 and Ser-97 each coordinate L-citrulline. Residue Gly-122 participates in ATP binding. L-aspartate is bound by residues Thr-124, Asn-128, and Asp-129. Asn-128 is an L-citrulline binding site. Residues Arg-132, Ser-181, Ser-190, Glu-266, and Tyr-278 each contribute to the L-citrulline site.

The protein belongs to the argininosuccinate synthase family. Type 1 subfamily. In terms of assembly, homotetramer.

It localises to the cytoplasm. The enzyme catalyses L-citrulline + L-aspartate + ATP = 2-(N(omega)-L-arginino)succinate + AMP + diphosphate + H(+). The protein operates within amino-acid biosynthesis; L-arginine biosynthesis; L-arginine from L-ornithine and carbamoyl phosphate: step 2/3. This Aliivibrio fischeri (strain MJ11) (Vibrio fischeri) protein is Argininosuccinate synthase.